A 208-amino-acid chain; its full sequence is ATP-dependent dethiobiotin synthetase BioD (208 aa).

Glu11–Phe16 is a binding site for ATP. Thr15 lines the Mg(2+) pocket. Residue Lys31 is part of the active site. Ser35 contacts substrate. Residues Asp42, Glu95–Gly98, and Asn155–Gln156 each bind ATP. Positions 42 and 95 each coordinate Mg(2+).

The protein belongs to the dethiobiotin synthetase family. As to quaternary structure, homodimer. Requires Mg(2+) as cofactor.

It is found in the cytoplasm. It catalyses the reaction (7R,8S)-7,8-diammoniononanoate + CO2 + ATP = (4R,5S)-dethiobiotin + ADP + phosphate + 3 H(+). The protein operates within cofactor biosynthesis; biotin biosynthesis; biotin from 7,8-diaminononanoate: step 1/2. Catalyzes a mechanistically unusual reaction, the ATP-dependent insertion of CO2 between the N7 and N8 nitrogen atoms of 7,8-diaminopelargonic acid (DAPA, also called 7,8-diammoniononanoate) to form a ureido ring. This chain is ATP-dependent dethiobiotin synthetase BioD, found in Chlamydia felis (strain Fe/C-56) (Chlamydophila felis).